The chain runs to 401 residues: Nodal homolog 3-C (401 aa).

An N-terminal signal peptide occupies residues M1 to A18. Residues M19 to R274 constitute a propeptide that is removed on maturation. N-linked (GlcNAc...) asparagine glycans are attached at residues N168, N337, and N344. Disulfide bonds link C299-C365 and C328-C396.

Belongs to the TGF-beta family. In terms of assembly, monomer. The propeptide region interacts with bmp4 in a non-covalent manner. Expressed in the dorsal marginal region of late blastula, becoming restricted to the Spemann organizer at the early gastrula stage.

The protein resides in the secreted. In terms of biological role, exhibits mesoderm-dorsalizing activity and neural-inducing activity, but lacks mesoderm-inducing activity. Regulates the expression of specific mesodermal and neural genes. Induces convergent extension movements at the embryonic midline by activating the fgf signaling pathway to induce t/bra expression in the organizer region. Acts with wnt11 to induce Spemann organizer cells and induce axis formation. The unprocessed protein antagonizes bmp-signaling. This Xenopus tropicalis (Western clawed frog) protein is Nodal homolog 3-C.